The sequence spans 452 residues: Phosphoglucosamine mutase (452 aa).

The Phosphoserine intermediate role is filled by Ser104. Residues Ser104, Asp246, Asp248, and Asp250 each contribute to the Mg(2+) site. Position 104 is a phosphoserine (Ser104).

Belongs to the phosphohexose mutase family. The cofactor is Mg(2+). Activated by phosphorylation.

The enzyme catalyses alpha-D-glucosamine 1-phosphate = D-glucosamine 6-phosphate. Catalyzes the conversion of glucosamine-6-phosphate to glucosamine-1-phosphate. This is Phosphoglucosamine mutase from Streptomyces griseus subsp. griseus (strain JCM 4626 / CBS 651.72 / NBRC 13350 / KCC S-0626 / ISP 5235).